A 260-amino-acid polypeptide reads, in one-letter code: Purine nucleoside phosphorylase PD_1754 (260 aa).

Zn(2+) is bound by residues H79, C120, and H137.

This sequence belongs to the purine nucleoside phosphorylase YfiH/LACC1 family. Homodimer. It depends on Cu(2+) as a cofactor. The cofactor is Zn(2+).

The enzyme catalyses adenosine + phosphate = alpha-D-ribose 1-phosphate + adenine. It catalyses the reaction S-methyl-5'-thioadenosine + phosphate = 5-(methylsulfanyl)-alpha-D-ribose 1-phosphate + adenine. It carries out the reaction inosine + phosphate = alpha-D-ribose 1-phosphate + hypoxanthine. The catalysed reaction is adenosine + H2O + H(+) = inosine + NH4(+). Purine nucleoside enzyme that catalyzes the phosphorolysis of adenosine and inosine nucleosides, yielding D-ribose 1-phosphate and the respective free bases, adenine and hypoxanthine. Also catalyzes the phosphorolysis of S-methyl-5'-thioadenosine into adenine and S-methyl-5-thio-alpha-D-ribose 1-phosphate. Also has adenosine deaminase activity. The protein is Purine nucleoside phosphorylase PD_1754 of Xylella fastidiosa (strain Temecula1 / ATCC 700964).